Reading from the N-terminus, the 474-residue chain is Probable periplasmic serine endoprotease DegP-like (474 aa).

Residues 1 to 25 (MRNLKSVTPLLMAALLWGQSLLAQA) form the signal peptide. Catalysis depends on charge relay system residues His113, Asp143, and Ser216. Substrate contacts are provided by residues 214–216 (GNS) and 271–275 (LGVVI). PDZ domains are found at residues 260–351 (LKAD…VRDG) and 357–463 (KVTI…LRQG).

It belongs to the peptidase S1C family.

It is found in the periplasm. The catalysed reaction is Acts on substrates that are at least partially unfolded. The cleavage site P1 residue is normally between a pair of hydrophobic residues, such as Val-|-Val.. In terms of biological role, might be efficient in the degradation of transiently denatured and unfolded proteins which accumulate in the periplasm following stress conditions. In Ectopseudomonas mendocina (strain ymp) (Pseudomonas mendocina), this protein is Probable periplasmic serine endoprotease DegP-like.